The primary structure comprises 475 residues: Sensor histidine kinase QseE (475 aa).

At 1 to 13 (MKRWPVFPRSLRQ) the chain is on the cytoplasmic side. A helical membrane pass occupies residues 14-34 (LVMLAFLLILLPLLVLAWQAW). The Periplasmic segment spans residues 35-173 (QSLNALSDQA…LQREIAERGQ (139 aa)). Residues 174–194 (YFGWQSLVLFLVSLVMVLLFT) form a helical membrane-spanning segment. The Cytoplasmic segment spans residues 195–475 (RMIIGPVKNI…IELPSSKNTK (281 aa)). The 217-residue stretch at 256 to 472 (HLSHELKTPL…CFRIELPSSK (217 aa)) folds into the Histidine kinase domain. The residue at position 259 (histidine 259) is a Phosphohistidine; by autocatalysis.

Post-translationally, autophosphorylated.

It is found in the cell inner membrane. The catalysed reaction is ATP + protein L-histidine = ADP + protein N-phospho-L-histidine.. Functionally, member of the two-component regulatory system QseF/QseE involved in the regulation of virulence and metabolism in EHEC. Required for pedestal formation in host epithelial cells during infection. Autophosphorylates in response to epinephrine, sulfate or phosphate and then probably transfers its phosphate group to QseF. In Escherichia coli O157:H7, this protein is Sensor histidine kinase QseE (qseE).